Reading from the N-terminus, the 544-residue chain is Chaperonin GroEL (544 aa).

Residues 29–32 (TLGP), Lys50, 86–90 (DGTTT), Gly414, 477–479 (DAA), and Asp493 contribute to the ATP site.

This sequence belongs to the chaperonin (HSP60) family. Forms a cylinder of 14 subunits composed of two heptameric rings stacked back-to-back. Interacts with the co-chaperonin GroES.

The protein resides in the cytoplasm. It catalyses the reaction ATP + H2O + a folded polypeptide = ADP + phosphate + an unfolded polypeptide.. In terms of biological role, together with its co-chaperonin GroES, plays an essential role in assisting protein folding. The GroEL-GroES system forms a nano-cage that allows encapsulation of the non-native substrate proteins and provides a physical environment optimized to promote and accelerate protein folding. In Hydrogenovibrio crunogenus (strain DSM 25203 / XCL-2) (Thiomicrospira crunogena), this protein is Chaperonin GroEL.